Consider the following 37-residue polypeptide: Cytochrome b6-f complex subunit 5 (37 aa).

The helical transmembrane segment at Ile5–Ala25 threads the bilayer.

Belongs to the PetG family. In terms of assembly, the 4 large subunits of the cytochrome b6-f complex are cytochrome b6, subunit IV (17 kDa polypeptide, PetD), cytochrome f and the Rieske protein, while the 4 small subunits are PetG, PetL, PetM and PetN. The complex functions as a dimer.

It is found in the cellular thylakoid membrane. Its function is as follows. Component of the cytochrome b6-f complex, which mediates electron transfer between photosystem II (PSII) and photosystem I (PSI), cyclic electron flow around PSI, and state transitions. PetG is required for either the stability or assembly of the cytochrome b6-f complex. The polypeptide is Cytochrome b6-f complex subunit 5 (Synechococcus sp. (strain JA-2-3B'a(2-13)) (Cyanobacteria bacterium Yellowstone B-Prime)).